The primary structure comprises 946 residues: Protein translocase subunit SecA (946 aa).

ATP contacts are provided by residues Gln-87, 105–109, and Asp-524; that span reads GEGKT. A disordered region spans residues 904–933; sequence PAQTTDKADRDPNKPETWGKVGRNEDCPCG. Zn(2+)-binding residues include Cys-930, Cys-932, Cys-941, and His-942.

The protein belongs to the SecA family. Monomer and homodimer. Part of the essential Sec protein translocation apparatus which comprises SecA, SecYEG and auxiliary proteins SecDF-YajC and YidC. Zn(2+) is required as a cofactor.

The protein localises to the cell inner membrane. It localises to the cytoplasm. It catalyses the reaction ATP + H2O + cellular proteinSide 1 = ADP + phosphate + cellular proteinSide 2.. Its function is as follows. Part of the Sec protein translocase complex. Interacts with the SecYEG preprotein conducting channel. Has a central role in coupling the hydrolysis of ATP to the transfer of proteins into and across the cell membrane, serving both as a receptor for the preprotein-SecB complex and as an ATP-driven molecular motor driving the stepwise translocation of polypeptide chains across the membrane. This chain is Protein translocase subunit SecA, found in Rhodopseudomonas palustris (strain TIE-1).